Reading from the N-terminus, the 152-residue chain is Large ribosomal subunit protein bL9 (152 aa).

Belongs to the bacterial ribosomal protein bL9 family.

In terms of biological role, binds to the 23S rRNA. The chain is Large ribosomal subunit protein bL9 from Streptococcus thermophilus (strain CNRZ 1066).